A 212-amino-acid polypeptide reads, in one-letter code: Calaxin (212 aa).

3 EF-hand domains span residues Thr65–Gly100, Thr101–Lys136, and Gly146–Leu181. Ca(2+)-binding residues include Asp78, Asp80, Asp82, Cys84, Glu89, Asp114, Asn116, Asp118, Glu125, Asp159, Asp161, Asp163, Lys165, and Asp170.

In terms of assembly, component of the outer dynein arm-docking complex along with ODAD1, ODAD2, ODAD3 and ODAD4.

The protein localises to the cytoplasm. Its subcellular location is the cytoskeleton. It localises to the cilium axoneme. The protein resides in the cell projection. It is found in the cilium. The protein localises to the flagellum. In terms of biological role, component of the outer dynein arm-docking complex (ODA-DC) that mediates outer dynein arms (ODA) binding onto the doublet microtubule. Seems to regulate the assembly of both ODAs and their axonemal docking complex onto ciliary microtubules. Regulates ciliary and flagellar motility and is required for cilia-driven determination of body laterality. This is Calaxin (Clxn) from Mus musculus (Mouse).